The sequence spans 246 residues: Myogenic factor 5 (246 aa).

The tract at residues 1 to 38 (RVRARIPGLSSPEGEFPEDFEPRELPPFGAPAPTEPAC) is disordered. A bHLH domain is found at 73-124 (DRRKAATMRERRRLKKVNQAFETLKRCTTANPNQRLPKVEILRNAIRYIESL). Residues 210-246 (EEPGLPLRHAGSLSPGASIDSGARTPGSPPPRTYQAL) are disordered. Pro residues predominate over residues 236–246 (GSPPPRTYQAL).

Efficient DNA binding requires dimerization with another bHLH protein.

Its subcellular location is the nucleus. Functionally, acts as a transcriptional activator that promotes transcription of muscle-specific target genes and plays a role in muscle differentiation. Induces fibroblasts to differentiate into myoblasts. Probable sequence specific DNA-binding protein. The polypeptide is Myogenic factor 5 (MYF5) (Coturnix japonica (Japanese quail)).